A 127-amino-acid polypeptide reads, in one-letter code: Ribonuclease VapC6 (127 aa).

The PINc domain occupies 26–120; the sequence is EPQRAEFCRS…ERHLPDIRVR (95 aa). Asp86 is a binding site for Mg(2+).

Belongs to the PINc/VapC protein family. Mg(2+) serves as cofactor.

Toxic component of a type II toxin-antitoxin (TA) system. An RNase. The cognate antitoxin is VapB6. The sequence is that of Ribonuclease VapC6 from Mycobacterium tuberculosis (strain CDC 1551 / Oshkosh).